The primary structure comprises 556 residues: Formate--tetrahydrofolate ligase (556 aa).

65–72 (TPAGEGKS) serves as a coordination point for ATP.

The protein belongs to the formate--tetrahydrofolate ligase family.

It carries out the reaction (6S)-5,6,7,8-tetrahydrofolate + formate + ATP = (6R)-10-formyltetrahydrofolate + ADP + phosphate. The protein operates within one-carbon metabolism; tetrahydrofolate interconversion. The sequence is that of Formate--tetrahydrofolate ligase from Streptococcus agalactiae serotype V (strain ATCC BAA-611 / 2603 V/R).